Consider the following 136-residue polypeptide: MLQPKQTKFRKMHKGRNRGLANGTDVIFGHFGLKASGRCRLTARQIESARRAMTRCIKRQGKIWIRVFPDKPITQKPLEVRMGKGKGNVEYWVDLIQPGKVLFEMGDVSEEIAREAFKLAAAKLPVGTTFVTKTVM.

It belongs to the universal ribosomal protein uL16 family. As to quaternary structure, part of the 50S ribosomal subunit.

Its function is as follows. Binds 23S rRNA and is also seen to make contacts with the A and possibly P site tRNAs. The chain is Large ribosomal subunit protein uL16 from Hamiltonella defensa subsp. Acyrthosiphon pisum (strain 5AT).